The primary structure comprises 463 residues: Major capsid protein (463 aa).

Residues 1-24 (MTIEKNLSDVQQKYADQFQEDVVK) constitute a propeptide that is removed on maturation.

Its subcellular location is the virion. In terms of biological role, assembles to form an icosahedral capsid. This Staphylococcus phage K protein is Major capsid protein.